We begin with the raw amino-acid sequence, 481 residues long: Replication factor C large subunit (481 aa).

43 to 50 (GKPGIGKT) is a binding site for ATP. Basic and acidic residues-rich tracts occupy residues 408–433 (KVER…KDAD) and 441–457 (VPKE…ERPA). Positions 408 to 481 (KVEREKEPEP…HNQSTLFDGF (74 aa)) are disordered. A compositionally biased stretch (polar residues) spans 471–481 (AHNQSTLFDGF).

The protein belongs to the activator 1 small subunits family. RfcL subfamily. Heteromultimer composed of small subunits (RfcS) and large subunits (RfcL).

Its function is as follows. Part of the RFC clamp loader complex which loads the PCNA sliding clamp onto DNA. The polypeptide is Replication factor C large subunit (Methanoregula boonei (strain DSM 21154 / JCM 14090 / 6A8)).